A 115-amino-acid chain; its full sequence is Large ribosomal subunit protein bL19 (115 aa).

This sequence belongs to the bacterial ribosomal protein bL19 family.

In terms of biological role, this protein is located at the 30S-50S ribosomal subunit interface and may play a role in the structure and function of the aminoacyl-tRNA binding site. This chain is Large ribosomal subunit protein bL19, found in Bacillus velezensis (strain DSM 23117 / BGSC 10A6 / LMG 26770 / FZB42) (Bacillus amyloliquefaciens subsp. plantarum).